Here is a 215-residue protein sequence, read N- to C-terminus: HTH-type transcriptional repressor FabR (215 aa).

In terms of domain architecture, HTH tetR-type spans K10–L70. Residues S33–F52 constitute a DNA-binding region (H-T-H motif).

As to quaternary structure, homodimer.

It localises to the cytoplasm. In terms of biological role, represses the transcription of fabB, involved in unsaturated fatty acid (UFA) biosynthesis. By controlling UFA production, FabR directly influences the physical properties of the membrane bilayer. This chain is HTH-type transcriptional repressor FabR, found in Escherichia coli O9:H4 (strain HS).